The following is a 308-amino-acid chain: D-alanine--D-alanine ligase (308 aa).

Residues 104–301 (KQIWQGSDLP…FDELCVAILD (198 aa)) form the ATP-grasp domain. 130–185 (IAELGLPVIIKPVHEGSSVGMSKVEKAEDFAAAIEKATQHDAVVMAEKWITGREFT) contributes to the ATP binding site. Mg(2+) contacts are provided by Asp-255, Glu-268, and Asn-270.

It belongs to the D-alanine--D-alanine ligase family. Mg(2+) is required as a cofactor. The cofactor is Mn(2+).

It is found in the cytoplasm. It carries out the reaction 2 D-alanine + ATP = D-alanyl-D-alanine + ADP + phosphate + H(+). Its pathway is cell wall biogenesis; peptidoglycan biosynthesis. Functionally, cell wall formation. The sequence is that of D-alanine--D-alanine ligase from Acinetobacter baumannii (strain AB307-0294).